The primary structure comprises 226 residues: ATP synthase F(0) complex subunit a (226 aa).

Helical transmembrane passes span 6–26 (FASF…IIMF), 68–88 (WSLM…LGLL), 97–117 (QLSM…FTGF), 136–156 (LLIP…PVAL), 164–184 (ITAG…LLNI), and 189–209 (AFIT…VALI).

It belongs to the ATPase A chain family. Component of the ATP synthase complex composed at least of ATP5F1A/subunit alpha, ATP5F1B/subunit beta, ATP5MC1/subunit c (homooctomer), MT-ATP6/subunit a, MT-ATP8/subunit 8, ATP5ME/subunit e, ATP5MF/subunit f, ATP5MG/subunit g, ATP5MK/subunit k, ATP5MJ/subunit j, ATP5F1C/subunit gamma, ATP5F1D/subunit delta, ATP5F1E/subunit epsilon, ATP5PF/subunit F6, ATP5PB/subunit b, ATP5PD/subunit d, ATP5PO/subunit OSCP. ATP synthase complex consists of a soluble F(1) head domain (subunits alpha(3) and beta(3)) - the catalytic core - and a membrane F(0) domain - the membrane proton channel (subunits c, a, 8, e, f, g, k and j). These two domains are linked by a central stalk (subunits gamma, delta, and epsilon) rotating inside the F1 region and a stationary peripheral stalk (subunits F6, b, d, and OSCP). Interacts with DNAJC30; interaction is direct.

It is found in the mitochondrion inner membrane. It carries out the reaction H(+)(in) = H(+)(out). In terms of biological role, subunit a, of the mitochondrial membrane ATP synthase complex (F(1)F(0) ATP synthase or Complex V) that produces ATP from ADP in the presence of a proton gradient across the membrane which is generated by electron transport complexes of the respiratory chain. ATP synthase complex consist of a soluble F(1) head domain - the catalytic core - and a membrane F(1) domain - the membrane proton channel. These two domains are linked by a central stalk rotating inside the F(1) region and a stationary peripheral stalk. During catalysis, ATP synthesis in the catalytic domain of F(1) is coupled via a rotary mechanism of the central stalk subunits to proton translocation. With the subunit c (ATP5MC1), forms the proton-conducting channel in the F(0) domain, that contains two crucial half-channels (inlet and outlet) that facilitate proton movement from the mitochondrial intermembrane space (IMS) into the matrix. Protons are taken up via the inlet half-channel and released through the outlet half-channel, following a Grotthuss mechanism. This Sus scrofa (Pig) protein is ATP synthase F(0) complex subunit a.